We begin with the raw amino-acid sequence, 256 residues long: MLAKRIIPCLDVTNGRVVKGVNFVELRDAGDPVEIARRYDEQGADEITFLDITATSDGRDLILHIIEAVASQVFIPLTVGGGVRTVEDVRRLLNAGADKISVNSSAIANPQLVSDATGKYGSQCIVVAIDAKRSSAPGEPPRWEVFTHGGRKATGLDAVEWAREMARRGAGEILLTSMDRDGTKSGFDLELTRAVSDAVPVPVIASGGVGGLQDLADGIRLGHADAVLAASIFHYGEHTVGEAKAFMAREGIPVRM.

Active-site residues include D11 and D130.

Belongs to the HisA/HisF family. In terms of assembly, heterodimer of HisH and HisF.

Its subcellular location is the cytoplasm. It carries out the reaction 5-[(5-phospho-1-deoxy-D-ribulos-1-ylimino)methylamino]-1-(5-phospho-beta-D-ribosyl)imidazole-4-carboxamide + L-glutamine = D-erythro-1-(imidazol-4-yl)glycerol 3-phosphate + 5-amino-1-(5-phospho-beta-D-ribosyl)imidazole-4-carboxamide + L-glutamate + H(+). It functions in the pathway amino-acid biosynthesis; L-histidine biosynthesis; L-histidine from 5-phospho-alpha-D-ribose 1-diphosphate: step 5/9. Its function is as follows. IGPS catalyzes the conversion of PRFAR and glutamine to IGP, AICAR and glutamate. The HisF subunit catalyzes the cyclization activity that produces IGP and AICAR from PRFAR using the ammonia provided by the HisH subunit. In Cupriavidus metallidurans (strain ATCC 43123 / DSM 2839 / NBRC 102507 / CH34) (Ralstonia metallidurans), this protein is Imidazole glycerol phosphate synthase subunit HisF.